The following is a 219-amino-acid chain: Carboxypeptidase Y inhibitor (219 aa).

Met1 carries the post-translational modification N-acetylmethionine.

Belongs to the phosphatidylethanolamine-binding protein family. Monomer.

The protein resides in the cytoplasm. Its function is as follows. Specific and potent inhibitor of carboxypeptidase Y. In Saccharomyces cerevisiae (strain ATCC 204508 / S288c) (Baker's yeast), this protein is Carboxypeptidase Y inhibitor (TFS1).